Consider the following 91-residue polypeptide: Probable Fe(2+)-trafficking protein (91 aa).

This sequence belongs to the Fe(2+)-trafficking protein family.

Its function is as follows. Could be a mediator in iron transactions between iron acquisition and iron-requiring processes, such as synthesis and/or repair of Fe-S clusters in biosynthetic enzymes. This chain is Probable Fe(2+)-trafficking protein, found in Cellvibrio japonicus (strain Ueda107) (Pseudomonas fluorescens subsp. cellulosa).